An 85-amino-acid polypeptide reads, in one-letter code: Large ribosomal subunit protein bL27 (85 aa).

The segment at 1–22 is disordered; the sequence is MAKTKAGGSTRNGRDSKGRRLG.

This sequence belongs to the bacterial ribosomal protein bL27 family.

This is Large ribosomal subunit protein bL27 from Mycoplasmopsis pulmonis (strain UAB CTIP) (Mycoplasma pulmonis).